Reading from the N-terminus, the 326-residue chain is Vacuolar protein sorting-associated protein 26A (326 aa).

It belongs to the VPS26 family. As to quaternary structure, component of the heterotrimeric retromer cargo-selective complex (CSC) which is believed to associate with variable sorting nexins to form functionally distinct retromer complex variants.

It is found in the cytoplasm. The protein localises to the endosome membrane. The protein resides in the early endosome. Its function is as follows. Acts as a component of the retromer cargo-selective complex (CSC). The CSC is believed to be the core functional component of retromer or respective retromer complex variants acting to prevent missorting of selected transmembrane cargo proteins into the lysosomal degradation pathway. Retromer mediates retrograde transport of cargo proteins from endosomes to the trans-Golgi network (TGN). The sequence is that of Vacuolar protein sorting-associated protein 26A (vps26a) from Xenopus tropicalis (Western clawed frog).